Reading from the N-terminus, the 624-residue chain is Probable pectinesterase/pectinesterase inhibitor 47 (624 aa).

An N-terminal signal peptide occupies residues 1–19 (MQTHSSSLVFLALLCLSWA). The segment at 24 to 88 (PTRPPSQPPS…PSPLPPNIAC (65 aa)) is disordered. Positions 25–84 (TRPPSQPPSHPPIQPSSQPPTQPPSQPPTQPPTQPPSHPPTQPPTPPPSQSPSQPSPLPP) are enriched in pro residues. A pectinesterase inhibitor 47 region spans residues 74 to 236 (QSPSQPSPLP…TRLYSVSLGL (163 aa)). N-linked (GlcNAc...) asparagine glycans are attached at residues Asn225, Asn330, Asn369, and Asn376. Residues 307 to 606 (AVTVGPYETD…FTVYNFTLGD (300 aa)) are pectinesterase 47. Thr385 lines the substrate pocket. An N-linked (GlcNAc...) asparagine glycan is attached at Asn387. Gln415 contacts substrate. Residue Asp438 is the Proton donor; for pectinesterase activity of the active site. A disulfide bridge links Cys452 with Cys472. Residue Asp459 is the Nucleophile; for pectinesterase activity of the active site. An N-linked (GlcNAc...) asparagine glycan is attached at Asn505. Arg527 and Trp529 together coordinate substrate. Residues Asn555, Asn596, and Asn601 are each glycosylated (N-linked (GlcNAc...) asparagine).

In the N-terminal section; belongs to the PMEI family. It in the C-terminal section; belongs to the pectinesterase family.

It is found in the secreted. The protein resides in the cell wall. The enzyme catalyses [(1-&gt;4)-alpha-D-galacturonosyl methyl ester](n) + n H2O = [(1-&gt;4)-alpha-D-galacturonosyl](n) + n methanol + n H(+). The protein operates within glycan metabolism; pectin degradation; 2-dehydro-3-deoxy-D-gluconate from pectin: step 1/5. In terms of biological role, acts in the modification of cell walls via demethylesterification of cell wall pectin. In Arabidopsis thaliana (Mouse-ear cress), this protein is Probable pectinesterase/pectinesterase inhibitor 47 (PME47).